We begin with the raw amino-acid sequence, 208 residues long: Probable GTP-binding protein EngB (208 aa).

The EngB-type G domain occupies Leu-23–Thr-205. Residues Gly-31–Ser-38, Gly-57–Leu-61, Asp-84–Gly-87, Thr-154–Asp-157, and Phe-182–Ala-184 contribute to the GTP site. Ser-38 and Thr-59 together coordinate Mg(2+).

Belongs to the TRAFAC class TrmE-Era-EngA-EngB-Septin-like GTPase superfamily. EngB GTPase family. Mg(2+) serves as cofactor.

Its function is as follows. Necessary for normal cell division and for the maintenance of normal septation. The protein is Probable GTP-binding protein EngB of Helicobacter acinonychis (strain Sheeba).